Consider the following 655-residue polypeptide: p-hydroxybenzoic acid efflux pump subunit AaeB (655 aa).

The Periplasmic segment spans residues 1-12 (MGIFSIANQHIR). Residues 13–33 (FAVKLATAIVLALFVGFHFQL) traverse the membrane as a helical segment. Topologically, residues 34 to 37 (ETPR) are cytoplasmic. A helical membrane pass occupies residues 38-58 (WAVLTAAIVAAGPAFAAGGEP). Residues 59-68 (YSGAIRYRGF) are Periplasmic-facing. Residues 69-89 (LRIIGTFIGCIAGLVIIIAMI) form a helical membrane-spanning segment. The Cytoplasmic segment spans residues 90–92 (RAP). A helical transmembrane segment spans residues 93 to 113 (LLMILVCCIWAGFCTWISSLV). Topologically, residues 114 to 120 (RIENSYA) are periplasmic. Residues 121-141 (WGLAGYTALIIVITIQPEPLL) traverse the membrane as a helical segment. Over 142-151 (TPQFAVERCS) the chain is Cytoplasmic. A helical membrane pass occupies residues 152 to 172 (EIVIGIVCAIMADLLFSPRSI). The Periplasmic segment spans residues 173 to 369 (KQEVDRELES…RTTLSCILGT (197 aa)). The chain crosses the membrane as a helical span at residues 370-390 (LFWLWTGWTSGSGAMVMIAVV). Residues 391–406 (TSLAMRLPNPRMVAID) lie on the Cytoplasmic side of the membrane. A helical membrane pass occupies residues 407–427 (FIYGTLAALPLGLLYFLVIIP). Residues 428–430 (NTQ) lie on the Periplasmic side of the membrane. Residues 431–451 (QSMLLLCISLAVLGFFLGIEV) traverse the membrane as a helical segment. Over 452-458 (QKRRLGS) the chain is Cytoplasmic. A helical transmembrane segment spans residues 459–479 (MGALASTINIIVLDNPMTFHF). The Periplasmic portion of the chain corresponds to 480–481 (SQ). A helical membrane pass occupies residues 482 to 502 (FLDSALGQIVGCVLAFTVILL). Residues 503–655 (VRDKSRDRTG…HKYQHALTDS (153 aa)) are Cytoplasmic-facing.

It belongs to the aromatic acid exporter ArAE (TC 2.A.85) family.

The protein localises to the cell inner membrane. In terms of biological role, forms an efflux pump with AaeA. Could function as a metabolic relief valve, allowing to eliminate certain compounds when they accumulate to high levels in the cell. This Shigella flexneri protein is p-hydroxybenzoic acid efflux pump subunit AaeB.